The sequence spans 320 residues: Malate dehydrogenase (320 aa).

Residues 10 to 15 (GAGQIG) and D34 contribute to the NAD(+) site. Residues R83 and R89 each coordinate substrate. Residues N96 and 119-121 (ITN) each bind NAD(+). Substrate-binding residues include N121 and R152. The Proton acceptor role is filled by H176.

The protein belongs to the LDH/MDH superfamily. MDH type 3 family.

It catalyses the reaction (S)-malate + NAD(+) = oxaloacetate + NADH + H(+). Its function is as follows. Catalyzes the reversible oxidation of malate to oxaloacetate. The sequence is that of Malate dehydrogenase from Ruegeria pomeroyi (strain ATCC 700808 / DSM 15171 / DSS-3) (Silicibacter pomeroyi).